A 461-amino-acid polypeptide reads, in one-letter code: Zinc transporter 6 (461 aa).

Over 1–33 (MGTIHLFRKPQRSFFGKLLQEFRLVAADRRSWK) the chain is Cytoplasmic. The chain crosses the membrane as a helical span at residues 34–54 (ILLFGAINLTCTGFLLMWCSS). Residues 55-64 (TNSIALTAYT) are Extracellular-facing. Residues 65-85 (YLTIFDLFSLITCLVSYWVMM) traverse the membrane as a helical segment. Topologically, residues 86 to 98 (RKPSPAYSFGFER) are cytoplasmic. The helical transmembrane segment at 99–119 (LEVLAVFASTVLAQLGALFIL) threads the bilayer. Over 120–134 (KESAERFLEQPEIHT) the chain is Extracellular. A helical membrane pass occupies residues 135-155 (GRLLVGTFVALSFNLFTMLSI). Residues 156–200 (RNKPFAYVSEAASTSWLQEHVADLSRSLCGIIPGLSSIFLPRMNP) are Cytoplasmic-facing. Residues 201 to 221 (FVLIDLAGAFALCITYMLIEI) form a helical membrane-spanning segment. At 222 to 223 (NN) the chain is on the extracellular side. The helical transmembrane segment at 224 to 244 (YFAVDTASAIAIALMTFGTMY) threads the bilayer. The Cytoplasmic portion of the chain corresponds to 245–461 (PMSVYSGKVL…TNNRIGQPRP (217 aa)). Residues 362–393 (PPLKGTDDSNPVTSTPTKPSSPPPEFSFNTPG) form a disordered region. Positions 370 to 379 (SNPVTSTPTK) are enriched in low complexity.

This sequence belongs to the cation diffusion facilitator (CDF) transporter (TC 2.A.4) family. SLC30A subfamily. Heterodimer with SLC30A5; form a functional zinc ion transmembrane transporter.

The protein resides in the golgi apparatus. The protein localises to the trans-Golgi network membrane. Its function is as follows. Has probably no intrinsic transporter activity but together with SLC30A5 forms a functional zinc ion:proton antiporter heterodimer, mediating zinc entry into the lumen of organelles along the secretory pathway. As part of that zinc ion:proton antiporter, contributes to zinc ion homeostasis within the early secretory pathway and regulates the activation and folding of enzymes like alkaline phosphatases and enzymes involved in phosphatidylinositol glycan anchor biosynthesis. This Bos taurus (Bovine) protein is Zinc transporter 6 (SLC30A6).